Here is a 27-residue protein sequence, read N- to C-terminus: Conotoxin flf14b (27 aa).

Disulfide bonds link cysteine 6–cysteine 26 and cysteine 10–cysteine 22.

Expressed by the venom duct.

The protein resides in the secreted. This chain is Conotoxin flf14b, found in Conus anabathrum floridanus (Florida cone).